The sequence spans 568 residues: Lariat debranching enzyme (568 aa).

The a divalent metal cation site is built by Cys-8, His-10, Asp-39, and Asn-84. The segment at 124 to 154 (SGIFKSHDFKKGHFEFPPYNPETLRSVYHIR) is lariat recognition loop. A divalent metal cation-binding residues include His-174, His-226, and His-228. The disordered stretch occupies residues 388–568 (IYGERGGKGA…TAVEDEESDS (181 aa)). Polar residues predominate over residues 417-428 (PSDTSGLSSSYN). Positions 432 to 444 (ITIEDEWEEEEDG) are enriched in acidic residues. A compositionally biased stretch (basic and acidic residues) spans 467 to 480 (DSDRDSSPQRETAK). Thr-478 is subject to Phosphothreonine. Positions 534 to 549 (GETTQSSAGQTGGTPQ) are enriched in low complexity. Ser-568 bears the Phosphoserine mark.

This sequence belongs to the lariat debranching enzyme family. Fe(2+) is required as a cofactor. Requires Zn(2+) as cofactor. Mn(2+) serves as cofactor.

It is found in the nucleus. Its activity is regulated as follows. Active in presence of diverse metals including Fe(2+), Zn(2+), Mn(2+). Also activated by Ca(2+). Binds two metal cations in two adjacent alpha and beta metal-binding pockets. Its function is as follows. Cleaves the 2'-5' phosphodiester linkage at the branch point of excised lariat intron RNA and converts them into linear molecules that can be subsequently degraded, thereby facilitating ribonucleotide turnover. Linked to its role in pre-mRNA processing mechanism, may also participate in retrovirus replication and have an antiviral cell-intrinsic defense function. The polypeptide is Lariat debranching enzyme (dbr1) (Danio rerio (Zebrafish)).